Here is a 502-residue protein sequence, read N- to C-terminus: 4,4'-diaponeurosporene oxygenase (502 aa).

8 to 20 contacts FAD; it reads IIGGGLGGISAAI.

The protein belongs to the carotenoid/retinoid oxidoreductase family. CrtP subfamily. Requires FAD as cofactor.

It catalyses the reaction all-trans-4,4'-diaponeurosporene + 2 AH2 + 2 O2 = 4,4'-diaponeurosporenal + 2 A + 3 H2O. Its pathway is carotenoid biosynthesis; staphyloxanthin biosynthesis; staphyloxanthin from farnesyl diphosphate: step 3/5. Its function is as follows. Involved in the biosynthesis of the yellow-orange carotenoid staphyloxanthin, which plays a role in the virulence via its protective function against oxidative stress. Catalyzes the oxidation of the terminal methyl side group of 4,4'-diaponeurosporene to form 4,4'-diaponeurosporen-4-al. The sequence is that of 4,4'-diaponeurosporene oxygenase from Staphylococcus haemolyticus (strain JCSC1435).